We begin with the raw amino-acid sequence, 366 residues long: Tetraacyldisaccharide 4'-kinase (366 aa).

51–58 contacts ATP; the sequence is TVGGTGKT.

Belongs to the LpxK family.

The enzyme catalyses a lipid A disaccharide + ATP = a lipid IVA + ADP + H(+). It participates in glycolipid biosynthesis; lipid IV(A) biosynthesis; lipid IV(A) from (3R)-3-hydroxytetradecanoyl-[acyl-carrier-protein] and UDP-N-acetyl-alpha-D-glucosamine: step 6/6. Functionally, transfers the gamma-phosphate of ATP to the 4'-position of a tetraacyldisaccharide 1-phosphate intermediate (termed DS-1-P) to form tetraacyldisaccharide 1,4'-bis-phosphate (lipid IVA). This is Tetraacyldisaccharide 4'-kinase from Phocaeicola vulgatus (strain ATCC 8482 / DSM 1447 / JCM 5826 / CCUG 4940 / NBRC 14291 / NCTC 11154) (Bacteroides vulgatus).